Here is a 372-residue protein sequence, read N- to C-terminus: Nickel transporter NicT (372 aa).

8 helical membrane passes run 30–50 (LMFAVIVALHLVGWLTVTLLV), 55–75 (LSLGGKAFGIGVGLTAYTLGL), 104–124 (VGFFFSLGHSTVVFGLAVMLV), 152–172 (ISGAFLYLIGILNVIVLVGIV), 218–238 (VGFLFGLGFDTATEIALLVLA), 245–265 (GLPWYAILCLPVLFAAGMCLL), 294–314 (VTGLSVAVALLIGSVELLGLI), and 335–355 (TVGFVVVAMFALTWAIALLVW).

The protein belongs to the NiCoT transporter (TC 2.A.52) family.

The protein localises to the cell membrane. The catalysed reaction is Ni(2+)(in) = Ni(2+)(out). With respect to regulation, export of the fluoroquinolone antibiotic norfloxacin is inhibited by the proton ionophore carbonyl cyanide m-chlorophenylhydrazone (CCCP). Nickel may influence the extrusion of antibiotics possibly by facilitating the proton motive force-dependent efflux process. In terms of biological role, involved in nickel uptake. In addition, acts as a drug efflux pump and contributes to moderate tolerance towards different classes of antibiotics, including fluoroquinolones, aminoglycosides and the anti-TB drug isoniazid, with a preference for fluoroquinolones. The drug efflux function is probably dependent on proton motive force (pmf) or ion gradient, and might be facilitated by the presence of Ni(2+) ions. This chain is Nickel transporter NicT, found in Mycobacterium tuberculosis (strain ATCC 25618 / H37Rv).